The chain runs to 407 residues: Imidazolonepropionase (407 aa).

Fe(3+) contacts are provided by histidine 68 and histidine 70. Zn(2+)-binding residues include histidine 68 and histidine 70. Residues arginine 77, tyrosine 140, and histidine 173 each contribute to the 4-imidazolone-5-propanoate site. Residue tyrosine 140 coordinates N-formimidoyl-L-glutamate. Histidine 238 contacts Fe(3+). Histidine 238 serves as a coordination point for Zn(2+). Glutamine 241 serves as a coordination point for 4-imidazolone-5-propanoate. Aspartate 313 is a Fe(3+) binding site. Zn(2+) is bound at residue aspartate 313. N-formimidoyl-L-glutamate-binding residues include asparagine 315 and glycine 317. Threonine 318 is a binding site for 4-imidazolone-5-propanoate.

The protein belongs to the metallo-dependent hydrolases superfamily. HutI family. It depends on Zn(2+) as a cofactor. Requires Fe(3+) as cofactor.

The protein localises to the cytoplasm. The enzyme catalyses 4-imidazolone-5-propanoate + H2O = N-formimidoyl-L-glutamate. It participates in amino-acid degradation; L-histidine degradation into L-glutamate; N-formimidoyl-L-glutamate from L-histidine: step 3/3. Its function is as follows. Catalyzes the hydrolytic cleavage of the carbon-nitrogen bond in imidazolone-5-propanoate to yield N-formimidoyl-L-glutamate. It is the third step in the universal histidine degradation pathway. This chain is Imidazolonepropionase, found in Burkholderia multivorans (strain ATCC 17616 / 249).